The primary structure comprises 441 residues: Phenoloxidase-activating enzyme (441 aa).

Residues 1 to 21 (MFLIWTFIVAVLAIQTKSVVA) form the signal peptide. A Pyrrolidone carboxylic acid modification is found at Q22. Clip domains are found at residues 23–76 (SCRT…AVCC) and 77–127 (PCNA…SICC). 8 cysteine pairs are disulfide-bonded: C24-C75, C34-C65, C40-C76, C78-C126, C88-C117, C94-C127, C164-C305, and C203-C219. Residues 174 to 440 (IVGGAPASID…YLPWIQNTIE (267 aa)) form the Peptidase S1 domain. The active-site Charge relay system is H218. Ca(2+) is bound by residues E237, N239, N242, and D246. N-linked (GlcNAc...) asparagine glycosylation occurs at N239. The Charge relay system role is filled by D285. An N-linked (GlcNAc...) asparagine glycan is attached at N334. 2 cysteine pairs are disulfide-bonded: C356/C377 and C387/C416. S391 (charge relay system) is an active-site residue.

Belongs to the peptidase S1 family. CLIP subfamily. In terms of assembly, in the active form, heterodimer of a light chain and a heavy chain; disulfide-linked. Proteolytically cleaved for activation. Cleavage produces a light chain and a catalytic heavy chain which remains covalently associated probably through an interchain disulfide bond. In terms of processing, glycosylated.

With respect to regulation, stabilized by calcium. Inhibited by di-isopropyl phosphorofluoridate (DFP), phenylmethanesulfonylfluoride (PMSF), p-nitrophenyl-p'-guanidinobenzonate (p-NPGB), p-chloromercuribenzoate (PCMB), ethylenediaminetetraacetic acid (EDTA), urea and CI-13c. In terms of biological role, endopeptidase with selective post-Arg cleavage site. Activates prophenoloxidase. Has a probable role in the melanization process as part of the innate immune response. In Bombyx mori (Silk moth), this protein is Phenoloxidase-activating enzyme.